The sequence spans 442 residues: MANSFAARIFTTLSDLQTNMANLKVIGIVIGKTDVKGFPDRKNIGSERYTFSFTIRDSPAHFVNAASWGNEDYIKSLSDSFRVGDCVIIENPLIQRKEIEREEKFSPATPSNCKLLLSENHSTVKVCSSYEVDTKLLSLIHLPVKESHDYYSLGDIVANGHSLNGRIINVLAAVKSVGEPKYFTTSDRRKGQRCEVRLYDETESSFAMTCWDNESILLAQSWMPRETVIFASDVRINFDKFRNCMTATVISKTIITTNPDIPEANILLNFIRENKETNVLDDEIDSYFKESINLSTIVDVYTVEQLKGKALKNEGKADPSYGILYAYISTLNIDDETTKVVRNRCSSCGYIVNEASNMCTTCNKNSLDFKSVFLSFHVLIDLTDHTGTLHSCSLTGSVAEETLGCTFVLSHRARSGLKISVLSCKLADPTEASRNLSGQKHV.

Positions 167–272 (IINVLAAVKS…EANILLNFIR (106 aa)) form a DNA-binding region, OB.

Belongs to the MEIOB family. In terms of assembly, component of a multiprotein complex with RPA2 and SPATA22. Interacts with SPATA22. Interacts with the complex BRME1:HSF2BP:BRCA2. In fetal gonads, specifically expressed in the ovary starting at the 14th weeks post fertilization. In the adult, restricted to testis.

It localises to the cytoplasm. The protein resides in the nucleus. It is found in the chromosome. Functionally, single-stranded DNA-binding protein required for homologous recombination in meiosis I. Required for double strand breaks (DSBs) repair and crossover formation and promotion of faithful and complete synapsis. Not required for the initial loading of recombinases but required to maintain a proper number of RAD51 and DMC1 foci after the zygotene stage. May act by ensuring the stabilization of recombinases, which is required for successful homology search and meiotic recombination. Displays Single-stranded DNA 3'-5' exonuclease activity in vitro. This Homo sapiens (Human) protein is Meiosis-specific with OB domain-containing protein.